Here is a 185-residue protein sequence, read N- to C-terminus: Ribosome-recycling factor (185 aa).

Belongs to the RRF family.

Its subcellular location is the cytoplasm. Its function is as follows. Responsible for the release of ribosomes from messenger RNA at the termination of protein biosynthesis. May increase the efficiency of translation by recycling ribosomes from one round of translation to another. The sequence is that of Ribosome-recycling factor from Sodalis glossinidius (strain morsitans).